The primary structure comprises 94 residues: Integration host factor subunit beta (94 aa).

It belongs to the bacterial histone-like protein family. As to quaternary structure, heterodimer of an alpha and a beta chain.

In terms of biological role, this protein is one of the two subunits of integration host factor, a specific DNA-binding protein that functions in genetic recombination as well as in transcriptional and translational control. This Brucella melitensis biotype 2 (strain ATCC 23457) protein is Integration host factor subunit beta.